We begin with the raw amino-acid sequence, 336 residues long: Probable GTPase MT1543 (336 aa).

GTP contacts are provided by residues 67–75 (GVPGVGKST), Asp-209, and 245–247 (SAV).

It belongs to the SIMIBI class G3E GTPase family. ArgK/MeaB subfamily. As to quaternary structure, homodimer.

Its function is as follows. Probable GTPase. May also bind and hydrolyze ATP. May function as chaperone. The protein is Probable GTPase MT1543 of Mycobacterium tuberculosis (strain CDC 1551 / Oshkosh).